A 208-amino-acid chain; its full sequence is Small ribosomal subunit protein uS4 (208 aa).

Residues 98-161 (QRLDNVVYRM…KTNSQILRAI (64 aa)) enclose the S4 RNA-binding domain.

It belongs to the universal ribosomal protein uS4 family. As to quaternary structure, part of the 30S ribosomal subunit. Contacts protein S5. The interaction surface between S4 and S5 is involved in control of translational fidelity.

Functionally, one of the primary rRNA binding proteins, it binds directly to 16S rRNA where it nucleates assembly of the body of the 30S subunit. Its function is as follows. With S5 and S12 plays an important role in translational accuracy. This chain is Small ribosomal subunit protein uS4, found in Sulfurovum sp. (strain NBC37-1).